Here is a 425-residue protein sequence, read N- to C-terminus: Glutamate-1-semialdehyde 2,1-aminomutase (425 aa).

N6-(pyridoxal phosphate)lysine is present on lysine 265.

It belongs to the class-III pyridoxal-phosphate-dependent aminotransferase family. HemL subfamily. Homodimer. It depends on pyridoxal 5'-phosphate as a cofactor.

It is found in the cytoplasm. It carries out the reaction (S)-4-amino-5-oxopentanoate = 5-aminolevulinate. The protein operates within porphyrin-containing compound metabolism; protoporphyrin-IX biosynthesis; 5-aminolevulinate from L-glutamyl-tRNA(Glu): step 2/2. In Desulfatibacillum aliphaticivorans, this protein is Glutamate-1-semialdehyde 2,1-aminomutase.